A 127-amino-acid polypeptide reads, in one-letter code: uncharacterized protein (127 aa).

The next 4 membrane-spanning stretches (helical) occupy residues 1 to 21 (MYII…YILV), 32 to 52 (TVAA…LYVF), 68 to 88 (AFFS…IILV), and 100 to 120 (ILDN…LVFK).

This sequence belongs to the GtrA family.

The protein localises to the cell membrane. This is an uncharacterized protein from Bacillus subtilis (strain 168).